The following is a 188-amino-acid chain: ATP synthase subunit b 1 (188 aa).

Residues 35 to 55 (VHFGSHLFWLAISFGLFYLFI) traverse the membrane as a helical segment.

This sequence belongs to the ATPase B chain family. F-type ATPases have 2 components, F(1) - the catalytic core - and F(0) - the membrane proton channel. F(1) has five subunits: alpha(3), beta(3), gamma(1), delta(1), epsilon(1). F(0) has three main subunits: a(1), b(2) and c(10-14). The alpha and beta chains form an alternating ring which encloses part of the gamma chain. F(1) is attached to F(0) by a central stalk formed by the gamma and epsilon chains, while a peripheral stalk is formed by the delta and b chains.

Its subcellular location is the cell inner membrane. Functionally, f(1)F(0) ATP synthase produces ATP from ADP in the presence of a proton or sodium gradient. F-type ATPases consist of two structural domains, F(1) containing the extramembraneous catalytic core and F(0) containing the membrane proton channel, linked together by a central stalk and a peripheral stalk. During catalysis, ATP synthesis in the catalytic domain of F(1) is coupled via a rotary mechanism of the central stalk subunits to proton translocation. In terms of biological role, component of the F(0) channel, it forms part of the peripheral stalk, linking F(1) to F(0). In Bartonella henselae (strain ATCC 49882 / DSM 28221 / CCUG 30454 / Houston 1) (Rochalimaea henselae), this protein is ATP synthase subunit b 1.